The following is a 276-amino-acid chain: Diaminopimelate epimerase (276 aa).

Substrate contacts are provided by Asn-13, Gln-46, and Asn-66. The active-site Proton donor is Cys-75. Residues Gly-76–Asn-77, Asn-159, Asn-192, and Glu-210–Arg-211 each bind substrate. Residue Cys-219 is the Proton acceptor of the active site. Gly-220 to Ser-221 serves as a coordination point for substrate.

This sequence belongs to the diaminopimelate epimerase family. Homodimer.

The protein localises to the cytoplasm. The enzyme catalyses (2S,6S)-2,6-diaminopimelate = meso-2,6-diaminopimelate. The protein operates within amino-acid biosynthesis; L-lysine biosynthesis via DAP pathway; DL-2,6-diaminopimelate from LL-2,6-diaminopimelate: step 1/1. Catalyzes the stereoinversion of LL-2,6-diaminopimelate (L,L-DAP) to meso-diaminopimelate (meso-DAP), a precursor of L-lysine and an essential component of the bacterial peptidoglycan. In Vibrio campbellii (strain ATCC BAA-1116), this protein is Diaminopimelate epimerase.